The chain runs to 846 residues: Aminopeptidase N (846 aa).

Substrate is bound by residues E120 and 252-256 (GAMEN). H288 is a Zn(2+) binding site. E289 serves as the catalytic Proton acceptor. Positions 292 and 311 each coordinate Zn(2+).

Belongs to the peptidase M1 family. In terms of assembly, monomer. Requires Zn(2+) as cofactor.

Its subcellular location is the cytoplasm. It carries out the reaction Release of an N-terminal amino acid, Xaa-|-Yaa- from a peptide, amide or arylamide. Xaa is preferably Ala, but may be most amino acids including Pro (slow action). When a terminal hydrophobic residue is followed by a prolyl residue, the two may be released as an intact Xaa-Pro dipeptide.. Aminopeptidase with broad substrate specificity to several peptides. It has more affinity for oligopeptides than for dipeptides. It plays an essential role in the metabolism, it may be involved in nitrogen supply or protein turnover. This is Aminopeptidase N (pepN) from Lactococcus lactis subsp. lactis (strain IL1403) (Streptococcus lactis).